Consider the following 218-residue polypeptide: Large ribosomal subunit protein uL16 (218 aa).

It belongs to the universal ribosomal protein uL16 family. In terms of assembly, component of the large ribosomal subunit. Mature ribosomes consist of a small (40S) and a large (60S) subunit. The 40S subunit contains about 33 different proteins and 1 molecule of RNA (18S). The 60S subunit contains about 49 different proteins and 3 molecules of RNA (28S, 5.8S and 5S).

The chain is Large ribosomal subunit protein uL16 (RpL10) from Drosophila melanogaster (Fruit fly).